A 1649-amino-acid polypeptide reads, in one-letter code: PHD and RING finger domain-containing protein 1 (1649 aa).

The segment at 1–79 (MDDDSLDELV…RSGSEDSEDD (79 aa)) is disordered. Ser5 is modified (phosphoserine). A compositionally biased stretch (acidic residues) spans 54-79 (TDGEDEGASEEEDLEDRSGSEDSEDD). The segment at 108–149 (CPICLNAFRDQAVGTPENCAHYFCLDCIVEWSKNANSCPVDR) adopts an RING-type; degenerate zinc-finger fold. The PHD-type zinc-finger motif lies at 183–233 (PTFCEVCGRSDREDRLLLCDGCDAGYHMECLDPPLQEVPVDEWFCPECAAP). The disordered stretch occupies residues 324–398 (VYQRPLTPRT…TRSRIARTLG (75 aa)). At Thr330 the chain carries Phosphothreonine. Over residues 334 to 353 (PARRKRKTRRRKKVPGRKKT) the composition is skewed to basic residues. Residues 354-366 (PSGPSAKSKSSAT) show a composition bias toward low complexity. Positions 367–382 (RSKKRQHRVKKRRGKK) are enriched in basic residues. Ser445 and Ser455 each carry phosphoserine. Disordered stretches follow at residues 534 to 600 (KRAA…GAPV), 644 to 871 (SAAS…PKAQ), 888 to 1240 (FGTE…KAPL), and 1281 to 1395 (IQLD…PLLR). Residues 568–589 (SPAQGPSGNRPQSTGLSCQGRS) are compositionally biased toward polar residues. Composition is skewed to basic and acidic residues over residues 685 to 697 (IRRD…RDAA) and 727 to 742 (TRAE…REPG). The segment covering 786–796 (AHSSQLSSPGF) has biased composition (polar residues). Residues 802–812 (PVDDKEQRKEN) are compositionally biased toward basic and acidic residues. 6 positions are modified to phosphoserine: Ser814, Ser845, Ser846, Ser864, Ser867, and Ser915. Composition is skewed to polar residues over residues 835-848 (PTGS…SSPE) and 859-871 (ITRT…PKAQ). Thr917 carries the phosphothreonine modification. Ser936, Ser973, and Ser991 each carry phosphoserine. A compositionally biased stretch (low complexity) spans 988–999 (RPPSRSRSTSSS). Over residues 1000-1011 (RSRKKAKRKRVS) the composition is skewed to basic residues. Over residues 1012–1030 (REHGRTRSGTRSESRDRSS) the composition is skewed to basic and acidic residues. Over residues 1043-1053 (RRQRSKAKSRR) the composition is skewed to basic residues. A compositionally biased stretch (basic and acidic residues) spans 1054 to 1063 (SSSDRSSSRE). Positions 1064–1090 (RAKRKKAKDKSREHRRGPWGHSRRTSR) are enriched in basic residues. The segment covering 1091-1101 (SRSGSPGSSSY) has biased composition (low complexity). Over residues 1106 to 1118 (SRKKKKRRSASRP) the composition is skewed to basic residues. Residues Ser1124 and Ser1128 each carry the phosphoserine modification. 2 stretches are compositionally biased toward basic and acidic residues: residues 1141–1151 (RSHERPDRKES) and 1181–1198 (REKW…KGAV). Phosphoserine occurs at positions 1202 and 1229. Residues 1284–1297 (DDMSSPPSPESTDS) are compositionally biased toward low complexity. Residues 1345–1356 (HLLRPDAAEKAE) show a composition bias toward basic and acidic residues. A phosphoserine mark is found at Ser1359, Ser1360, and Ser1371. Position 1404 is a phosphothreonine (Thr1404). 4 disordered regions span residues 1407 to 1439 (LQES…WDME), 1455 to 1486 (FPSH…AQPS), 1526 to 1556 (TPAS…EKTK), and 1630 to 1649 (MRRH…GAEG). A compositionally biased stretch (polar residues) spans 1531–1540 (PASQATAASN). Positions 1541–1556 (SEEKTPAPRLAAEKTK) are enriched in basic and acidic residues. Residues 1549-1579 (RLAAEKTKKEEYMKKLHMQERAVEEVKLAIK) are a coiled coil.

As to quaternary structure, interacts with POLR2A (via the C-terminal domain).

The protein is PHD and RING finger domain-containing protein 1 (PHRF1) of Homo sapiens (Human).